We begin with the raw amino-acid sequence, 610 residues long: Elongation factor 4 (610 aa).

The 183-residue stretch at glutamate 11–threonine 193 folds into the tr-type G domain. Residues aspartate 23 to threonine 28 and asparagine 140 to aspartate 143 contribute to the GTP site.

The protein belongs to the TRAFAC class translation factor GTPase superfamily. Classic translation factor GTPase family. LepA subfamily.

It is found in the cell membrane. The catalysed reaction is GTP + H2O = GDP + phosphate + H(+). Functionally, required for accurate and efficient protein synthesis under certain stress conditions. May act as a fidelity factor of the translation reaction, by catalyzing a one-codon backward translocation of tRNAs on improperly translocated ribosomes. Back-translocation proceeds from a post-translocation (POST) complex to a pre-translocation (PRE) complex, thus giving elongation factor G a second chance to translocate the tRNAs correctly. Binds to ribosomes in a GTP-dependent manner. The polypeptide is Elongation factor 4 (Streptococcus pyogenes serotype M1).